Here is a 499-residue protein sequence, read N- to C-terminus: Maturase K (499 aa).

The protein belongs to the intron maturase 2 family. MatK subfamily.

It is found in the plastid. Its subcellular location is the chloroplast. In terms of biological role, usually encoded in the trnK tRNA gene intron. Probably assists in splicing its own and other chloroplast group II introns. The protein is Maturase K of Gymnocladus dioicus (Kentucky coffee tree).